A 318-amino-acid chain; its full sequence is Methionyl-tRNA formyltransferase (318 aa).

Residue 110-113 (SLLP) coordinates (6S)-5,6,7,8-tetrahydrofolate.

The protein belongs to the Fmt family.

It catalyses the reaction L-methionyl-tRNA(fMet) + (6R)-10-formyltetrahydrofolate = N-formyl-L-methionyl-tRNA(fMet) + (6S)-5,6,7,8-tetrahydrofolate + H(+). Its function is as follows. Attaches a formyl group to the free amino group of methionyl-tRNA(fMet). The formyl group appears to play a dual role in the initiator identity of N-formylmethionyl-tRNA by promoting its recognition by IF2 and preventing the misappropriation of this tRNA by the elongation apparatus. This chain is Methionyl-tRNA formyltransferase, found in Lacticaseibacillus casei (strain BL23) (Lactobacillus casei).